The sequence spans 195 residues: Holliday junction branch migration complex subunit RuvA (195 aa).

The interval 1–64 (MIGRIAGLLL…EDAHLLFGFM (64 aa)) is domain I. The tract at residues 65-140 (TEPERVLFRQ…KISPAITLPE (76 aa)) is domain II. The interval 140–144 (ETGTA) is flexible linker. Positions 145-195 (MASSTDKDILNALSALGYNDREANWAVGQLSEGVTVSDGIMQSLRLLSKAK) are domain III.

This sequence belongs to the RuvA family. Homotetramer. Forms an RuvA(8)-RuvB(12)-Holliday junction (HJ) complex. HJ DNA is sandwiched between 2 RuvA tetramers; dsDNA enters through RuvA and exits via RuvB. An RuvB hexamer assembles on each DNA strand where it exits the tetramer. Each RuvB hexamer is contacted by two RuvA subunits (via domain III) on 2 adjacent RuvB subunits; this complex drives branch migration. In the full resolvosome a probable DNA-RuvA(4)-RuvB(12)-RuvC(2) complex forms which resolves the HJ.

It localises to the cytoplasm. Its function is as follows. The RuvA-RuvB-RuvC complex processes Holliday junction (HJ) DNA during genetic recombination and DNA repair, while the RuvA-RuvB complex plays an important role in the rescue of blocked DNA replication forks via replication fork reversal (RFR). RuvA specifically binds to HJ cruciform DNA, conferring on it an open structure. The RuvB hexamer acts as an ATP-dependent pump, pulling dsDNA into and through the RuvAB complex. HJ branch migration allows RuvC to scan DNA until it finds its consensus sequence, where it cleaves and resolves the cruciform DNA. This is Holliday junction branch migration complex subunit RuvA from Nitrosomonas europaea (strain ATCC 19718 / CIP 103999 / KCTC 2705 / NBRC 14298).